A 269-amino-acid chain; its full sequence is MPELPEVETSRRGIEPHLVGATILHAVVRNGRLRWPVSEEIYRLSDQPVLSVQRRAKYLLLELPEGWIIIHLGMSGSLRILTEGLPPEKHDHVDLVMSNGKVLRYTDPRRFGAWLWAKELEGHNVLAHLGPEPLSDDFNGEYLHQKCAKKKTAIKPWLMDNKLVVGVGNIYASESLFAAGIHPDRLASSLSLAECELLARVIKAVLLRSIEQGGTTLKDFLQSDGKPGYFAQELQVYGRKGEPCRVCGTPIVATKHAQRATFYCRQCQK.

Pro2 serves as the catalytic Schiff-base intermediate with DNA. Catalysis depends on Glu3, which acts as the Proton donor. The active-site Proton donor; for beta-elimination activity is Lys57. His90, Arg109, and Lys150 together coordinate DNA. The FPG-type zinc finger occupies 235–269 (QVYGRKGEPCRVCGTPIVATKHAQRATFYCRQCQK). The active-site Proton donor; for delta-elimination activity is the Arg259.

It belongs to the FPG family. As to quaternary structure, monomer. Zn(2+) serves as cofactor.

The catalysed reaction is Hydrolysis of DNA containing ring-opened 7-methylguanine residues, releasing 2,6-diamino-4-hydroxy-5-(N-methyl)formamidopyrimidine.. It catalyses the reaction 2'-deoxyribonucleotide-(2'-deoxyribose 5'-phosphate)-2'-deoxyribonucleotide-DNA = a 3'-end 2'-deoxyribonucleotide-(2,3-dehydro-2,3-deoxyribose 5'-phosphate)-DNA + a 5'-end 5'-phospho-2'-deoxyribonucleoside-DNA + H(+). Functionally, involved in base excision repair of DNA damaged by oxidation or by mutagenic agents. Acts as a DNA glycosylase that recognizes and removes damaged bases. Has a preference for oxidized purines, such as 7,8-dihydro-8-oxoguanine (8-oxoG). Has AP (apurinic/apyrimidinic) lyase activity and introduces nicks in the DNA strand. Cleaves the DNA backbone by beta-delta elimination to generate a single-strand break at the site of the removed base with both 3'- and 5'-phosphates. In Shigella dysenteriae serotype 1 (strain Sd197), this protein is Formamidopyrimidine-DNA glycosylase.